The following is a 464-amino-acid chain: Phosphoglucosamine mutase (464 aa).

The active-site Phosphoserine intermediate is S112. The Mg(2+) site is built by S112, D252, D254, and D256. At S112 the chain carries Phosphoserine.

This sequence belongs to the phosphohexose mutase family. The cofactor is Mg(2+). Activated by phosphorylation.

The catalysed reaction is alpha-D-glucosamine 1-phosphate = D-glucosamine 6-phosphate. In terms of biological role, catalyzes the conversion of glucosamine-6-phosphate to glucosamine-1-phosphate. This Synechococcus sp. (strain CC9605) protein is Phosphoglucosamine mutase.